The following is a 532-amino-acid chain: MSDLLTDELGQAFQITDEDKGCRIKGQQCILANIGVVRSIATFLSTSLGPTGMDKILQSKDEDIVVTNDGATILKEMEMTENPISRLIVQLSESQDEEIGDGTTSVVVLASALLDQAQALLGQGVHPIKISEGFEVGLGHAVEHLSEISEEISDLKETMMKAAKTSLGSKIVYKSLERFAEICTDAVLMVADMERKDLDFELINIESKVGRDLSSTALIKGIVINKEFSHPQMKKEVKDGRIALLSCPFEPPKLKTKHSLVISNPKEYKELEEYEKKKFAEMIESIKRSGSNIVMCQWGFDDEANSLLMENGLPAVRWVGGHELELLAVHTGGSIVARFEDLEESDLGKARVREESLGTENDKIIVVENEGCSKAVTILVRGANDLVIEEAKRSIRDALCAVRNILTNSRIVYGGGSSEMSCSLALERIATGYSGEEREAILGFGRALEEIPLCLARNSGHDPIGYSSDLRKLQMESKNFHLGVDCLGDGEQDMKKLGVFDALSSKIRQFQMATQLVTMVLKIDNVVSDFHD.

The protein belongs to the TCP-1 chaperonin family. In terms of assembly, component of the T-complex protein 1 (TCP1) complex.

It is found in the cytoplasm. Functionally, molecular chaperone; assists the folding of proteins upon ATP hydrolysis. This chain is T-complex protein 1 subunit epsilon (CCT5), found in Encephalitozoon cuniculi (strain GB-M1) (Microsporidian parasite).